The chain runs to 234 residues: Ras-related protein Rab-20 (234 aa).

GTP-binding residues include G17, K18, T19, D32, and T36. T19 provides a ligand contact to Mg(2+). 2 short sequence motifs (switch) span residues 28–41 (RRFP…GGAF) and 55–72 (DTAG…YCRG). Residues T36 and D55 each contribute to the Mg(2+) site. The GTP site is built by G58, N113, K114, and D116. A disordered region spans residues 125–144 (GQEKEECSPNMDAGDRVSPR). Positions 126-142 (QEKEECSPNMDAGDRVS) are enriched in basic and acidic residues. The GTP site is built by A184 and K185. Residues 212-234 (RPSHTVDISSHKPPKRTRSGCCA) form a disordered region. Positions 223-234 (KPPKRTRSGCCA) are enriched in basic residues. 2 S-geranylgeranyl cysteine lipidation sites follow: C232 and C233.

This sequence belongs to the small GTPase superfamily. Rab family. Requires Mg(2+) as cofactor. Low or absent expression in normal pancreas and stronger expression in 15 of 18 exocrine pancreatic adenocarcinomas (at protein level).

It localises to the golgi apparatus. The protein localises to the cytoplasmic vesicle. The protein resides in the phagosome. Its subcellular location is the phagosome membrane. It carries out the reaction GTP + H2O = GDP + phosphate + H(+). With respect to regulation, regulated by guanine nucleotide exchange factors (GEFs) which promote the exchange of bound GDP for free GTP. Regulated by GTPase activating proteins (GAPs) which increase the GTP hydrolysis activity. Inhibited by GDP dissociation inhibitors (GDIs). The small GTPases Rab are key regulators of intracellular membrane trafficking, from the formation of transport vesicles to their fusion with membranes. Rabs cycle between an inactive GDP-bound form and an active GTP-bound form that is able to recruit to membranes different sets of downstream effectors directly responsible for vesicle formation, movement, tethering and fusion. RAB20 plays a role in apical endocytosis/recycling. Plays a role in the maturation and acidification of phagosomes that engulf pathogens, such as S.aureus and M.tuberculosis. Plays a role in the fusion of phagosomes with lysosomes. In Homo sapiens (Human), this protein is Ras-related protein Rab-20.